A 379-amino-acid chain; its full sequence is Thiosulfate/3-mercaptopyruvate sulfurtransferase 1, mitochondrial (379 aa).

A mitochondrion-targeting transit peptide spans 1–56; sequence MASTLFSRTFLAASHRLITPSLPQKIFNPATFLSRSLHSQLGSASTAYKSTTWARR. Ala-57 is modified (N-acetylalanine). Rhodanese domains lie at 91-208 and 259-373; these read REPD…DVES and EDPT…LPIE. Residue Cys-333 is the Cysteine persulfide intermediate of the active site.

In terms of tissue distribution, expressed in roots, rosette and cauline leaves, stems, flowers and siliques.

It is found in the mitochondrion. It carries out the reaction thiosulfate + hydrogen cyanide = thiocyanate + sulfite + 2 H(+). The enzyme catalyses 2-oxo-3-sulfanylpropanoate + [thioredoxin]-dithiol = [thioredoxin]-disulfide + hydrogen sulfide + pyruvate + H(+). Catalyzes the transfer of a sulfur ion from a donor to cyanide or to other thiol compounds. Substrate preference is 3-mercaptopyruvate &gt; thiosulfate. Involved in embryo and seed development. This Arabidopsis thaliana (Mouse-ear cress) protein is Thiosulfate/3-mercaptopyruvate sulfurtransferase 1, mitochondrial (STR1).